A 229-amino-acid chain; its full sequence is AA9 family lytic polysaccharide monooxygenase E (229 aa).

An N-terminal signal peptide occupies residues 1–19 (MRSSDITFVLLSVVATVRS). His20 contacts Cu(2+). Cysteines 57 and 178 form a disulfide. N-linked (GlcNAc...) asparagine glycosylation is present at Asn76. Residue His99 coordinates Cu(2+). Residues His164 and Gln173 each coordinate O2. Tyr175 lines the Cu(2+) pocket. Asn217 carries an N-linked (GlcNAc...) asparagine glycan.

The protein belongs to the polysaccharide monooxygenase AA9 family. Requires Cu(2+) as cofactor.

It is found in the secreted. It catalyses the reaction [(1-&gt;4)-beta-D-glucosyl]n+m + reduced acceptor + O2 = 4-dehydro-beta-D-glucosyl-[(1-&gt;4)-beta-D-glucosyl]n-1 + [(1-&gt;4)-beta-D-glucosyl]m + acceptor + H2O.. Lytic polysaccharide monooxygenase (LPMO) that depolymerizes crystalline and amorphous polysaccharides via the oxidation of scissile alpha- or beta-(1-4)-glycosidic bonds, yielding C1 and C4 oxidation products. Catalysis by LPMOs requires the reduction of the active-site copper from Cu(II) to Cu(I) by a reducing agent and H(2)O(2) or O(2) as a cosubstrate. The chain is AA9 family lytic polysaccharide monooxygenase E from Botryotinia fuckeliana (strain B05.10) (Noble rot fungus).